We begin with the raw amino-acid sequence, 459 residues long: UDP-N-acetylmuramoylalanine--D-glutamate ligase (459 aa).

131–137 is an ATP binding site; sequence GANGKST.

Belongs to the MurCDEF family.

It localises to the cytoplasm. It carries out the reaction UDP-N-acetyl-alpha-D-muramoyl-L-alanine + D-glutamate + ATP = UDP-N-acetyl-alpha-D-muramoyl-L-alanyl-D-glutamate + ADP + phosphate + H(+). It participates in cell wall biogenesis; peptidoglycan biosynthesis. Cell wall formation. Catalyzes the addition of glutamate to the nucleotide precursor UDP-N-acetylmuramoyl-L-alanine (UMA). In Methylococcus capsulatus (strain ATCC 33009 / NCIMB 11132 / Bath), this protein is UDP-N-acetylmuramoylalanine--D-glutamate ligase.